Here is a 579-residue protein sequence, read N- to C-terminus: V-type ATP synthase alpha chain (579 aa).

227 to 234 is a binding site for ATP; the sequence is GGFGTGKT.

This sequence belongs to the ATPase alpha/beta chains family.

It carries out the reaction ATP + H2O + 4 H(+)(in) = ADP + phosphate + 5 H(+)(out). Its function is as follows. Produces ATP from ADP in the presence of a proton gradient across the membrane. The V-type alpha chain is a catalytic subunit. This is V-type ATP synthase alpha chain from Anaeromyxobacter sp. (strain K).